The chain runs to 146 residues: MFKEFKEFAMKGNMVSLAIGVVIGGAFSKIVTSLVNDIIMPLVGLLMGRVDFSNLFFTLGSGNFKTVQEAKDAGVATVNYGIFINNIIDFLIVAFSIFIIIQQISKLTKKKGENIVPDKKKCKYCYTEINSQATRCPNCTSELKEN.

2 helical membrane passes run 15–35 (VSLA…TSLV) and 81–101 (GIFI…FIII).

It belongs to the MscL family. In terms of assembly, homopentamer.

It is found in the cell membrane. Its function is as follows. Channel that opens in response to stretch forces in the membrane lipid bilayer. May participate in the regulation of osmotic pressure changes within the cell. This chain is Large-conductance mechanosensitive channel, found in Clostridium beijerinckii (strain ATCC 51743 / NCIMB 8052) (Clostridium acetobutylicum).